Here is a 449-residue protein sequence, read N- to C-terminus: Hyaluronidase-3 (449 aa).

The N-terminal stretch at 1–23 (MYHIWIKFLAAWIFLKKFNGVHV) is a signal peptide. 2 disulfide bridges follow: Cys-47/Cys-340 and Cys-211/Cys-227. 3 N-linked (GlcNAc...) asparagine glycosylation sites follow: Asn-67, Asn-103, and Asn-111. Glu-135 functions as the Proton donor in the catalytic mechanism. A glycan (N-linked (GlcNAc...) asparagine) is linked at Asn-153. Asn-357 carries N-linked (GlcNAc...) asparagine glycosylation. Disulfide bonds link Cys-365-Cys-376, Cys-370-Cys-427, and Cys-429-Cys-438. An N-linked (GlcNAc...) asparagine glycan is attached at Asn-401. Positions 427 to 438 (CQCYQGWKGLYC) constitute an EGF-like domain.

It belongs to the glycosyl hydrolase 56 family. As to quaternary structure, monomer. As to expression, expressed by the venom gland.

Its subcellular location is the secreted. The catalysed reaction is Random hydrolysis of (1-&gt;4)-linkages between N-acetyl-beta-D-glucosamine and D-glucuronate residues in hyaluronate.. In terms of biological role, snake venom endo-hyaluronidase that degrades hyaluronan to smaller oligosaccharide fragments. In venom, it is not toxic by itself, but increases the diffusion of other venom proteins by degrading the extracellular matrix. In addition, it displays antiedematogenic activity. This chain is Hyaluronidase-3, found in Cerastes cerastes (Horned desert viper).